An 83-amino-acid polypeptide reads, in one-letter code: Sec-independent protein translocase protein TatA (83 aa).

A helical transmembrane segment spans residues 1 to 21; it reads MGGLSLPHLIVLALVVLILFG. The tract at residues 34-83 is disordered; it reads KGIKSFKQGMNDEDSKPVTPPPAQIPPASLQQTPPPAQPAPQPTSTDQAQ. The span at 66–75 shows a compositional bias: pro residues; the sequence is TPPPAQPAPQ.

It belongs to the TatA/E family. The Tat system comprises two distinct complexes: a TatABC complex, containing multiple copies of TatA, TatB and TatC subunits, and a separate TatA complex, containing only TatA subunits. Substrates initially bind to the TatABC complex, which probably triggers association of the separate TatA complex to form the active translocon.

Its subcellular location is the cell inner membrane. Its function is as follows. Part of the twin-arginine translocation (Tat) system that transports large folded proteins containing a characteristic twin-arginine motif in their signal peptide across membranes. TatA could form the protein-conducting channel of the Tat system. The protein is Sec-independent protein translocase protein TatA of Novosphingobium aromaticivorans (strain ATCC 700278 / DSM 12444 / CCUG 56034 / CIP 105152 / NBRC 16084 / F199).